Consider the following 145-residue polypeptide: MIALIQRVSEASVTVEGEMTGAIGQGLLVLLGVEQGDDEAKADKLLHKVSGYRIFSDENGKMNLNVSQAGGGLLVVSQFTLAADTNKGMRPSFSGGAHPVEAERLYDYFVAQAAASGIPTATGRFAADMKVALVNDGPVTFWLQV.

The Gly-cisPro motif, important for rejection of L-amino acids signature appears at 137–138 (GP).

Belongs to the DTD family. Homodimer.

It localises to the cytoplasm. It carries out the reaction glycyl-tRNA(Ala) + H2O = tRNA(Ala) + glycine + H(+). It catalyses the reaction a D-aminoacyl-tRNA + H2O = a tRNA + a D-alpha-amino acid + H(+). In terms of biological role, an aminoacyl-tRNA editing enzyme that deacylates mischarged D-aminoacyl-tRNAs. Also deacylates mischarged glycyl-tRNA(Ala), protecting cells against glycine mischarging by AlaRS. Acts via tRNA-based rather than protein-based catalysis; rejects L-amino acids rather than detecting D-amino acids in the active site. By recycling D-aminoacyl-tRNA to D-amino acids and free tRNA molecules, this enzyme counteracts the toxicity associated with the formation of D-aminoacyl-tRNA entities in vivo and helps enforce protein L-homochirality. This Aeromonas hydrophila subsp. hydrophila (strain ATCC 7966 / DSM 30187 / BCRC 13018 / CCUG 14551 / JCM 1027 / KCTC 2358 / NCIMB 9240 / NCTC 8049) protein is D-aminoacyl-tRNA deacylase.